The following is a 629-amino-acid chain: tRNA uridine 5-carboxymethylaminomethyl modification enzyme MnmG (629 aa).

FAD contacts are provided by residues 14–19, Val-126, and Ser-181; that span reads GAGHAG. NAD(+) is bound at residue 273-287; it reads GPRYCPSIEDKVVRF. Gln-370 lines the FAD pocket.

Belongs to the MnmG family. As to quaternary structure, homodimer. Heterotetramer of two MnmE and two MnmG subunits. It depends on FAD as a cofactor.

It localises to the cytoplasm. Its function is as follows. NAD-binding protein involved in the addition of a carboxymethylaminomethyl (cmnm) group at the wobble position (U34) of certain tRNAs, forming tRNA-cmnm(5)s(2)U34. This is tRNA uridine 5-carboxymethylaminomethyl modification enzyme MnmG from Bacillus mycoides (strain KBAB4) (Bacillus weihenstephanensis).